The chain runs to 212 residues: Thymidylate kinase (212 aa).

Position 11–18 (11–18) interacts with ATP; the sequence is GPEGAGKT.

This sequence belongs to the thymidylate kinase family.

It catalyses the reaction dTMP + ATP = dTDP + ADP. Phosphorylation of dTMP to form dTDP in both de novo and salvage pathways of dTTP synthesis. The protein is Thymidylate kinase of Streptococcus pneumoniae (strain CGSP14).